The following is a 298-amino-acid chain: Elongation factor Ts (298 aa).

The segment at 79 to 82 is involved in Mg(2+) ion dislocation from EF-Tu; it reads TDFV.

Belongs to the EF-Ts family.

The protein localises to the cytoplasm. In terms of biological role, associates with the EF-Tu.GDP complex and induces the exchange of GDP to GTP. It remains bound to the aminoacyl-tRNA.EF-Tu.GTP complex up to the GTP hydrolysis stage on the ribosome. The sequence is that of Elongation factor Ts (tsf) from Mycoplasma genitalium (strain ATCC 33530 / DSM 19775 / NCTC 10195 / G37) (Mycoplasmoides genitalium).